The following is a 68-amino-acid chain: Acylphosphatase (68 aa).

The 66-residue stretch at 3 to 68 folds into the Acylphosphatase-like domain; that stretch reads RIACTVHGRV…RCTAGLPSAP (66 aa). Catalysis depends on residues R18 and N36.

This sequence belongs to the acylphosphatase family.

It carries out the reaction an acyl phosphate + H2O = a carboxylate + phosphate + H(+). This is Acylphosphatase (acyP) from Oleidesulfovibrio alaskensis (strain ATCC BAA-1058 / DSM 17464 / G20) (Desulfovibrio alaskensis).